The following is a 217-amino-acid chain: 3,4-dihydroxy-2-butanone 4-phosphate synthase (217 aa).

D-ribulose 5-phosphate is bound by residues 37 to 38, aspartate 42, 150 to 154, and glutamate 174; these read RE and RRGHT. Residue glutamate 38 participates in Mg(2+) binding. Histidine 153 serves as a coordination point for Mg(2+).

It belongs to the DHBP synthase family. As to quaternary structure, homodimer. Mg(2+) serves as cofactor. Requires Mn(2+) as cofactor.

It carries out the reaction D-ribulose 5-phosphate = (2S)-2-hydroxy-3-oxobutyl phosphate + formate + H(+). It participates in cofactor biosynthesis; riboflavin biosynthesis; 2-hydroxy-3-oxobutyl phosphate from D-ribulose 5-phosphate: step 1/1. Functionally, catalyzes the conversion of D-ribulose 5-phosphate to formate and 3,4-dihydroxy-2-butanone 4-phosphate. The chain is 3,4-dihydroxy-2-butanone 4-phosphate synthase from Shewanella sp. (strain W3-18-1).